The sequence spans 348 residues: MFKMVSSPHTHGTNLTAKFMLWVIVAMLPALIVQIAFFGTGVVIQLAIALSMAIVIEIVVAKLRHKSTTFYLADLAGVVTATILAMAIPPYAPYWVVMIGMIVALLLAKHCYGGLGQNLFNPAMVAYAFLLISFPVQMTSWLPSFELLAEPPTFKDAWLLIFKGVTSDGFTSRQLLSGIDGIAQATPLDSAKTSIAKLGFDGVIQSPIFSGIFARGWLQLNLAFLAGGLFLLYKRIIHWQIPVAMLVVFSVLSALTDLVTMHTHLNVLSQLFSGAMMFGAFFIATDPVSASITPKGKLIFGGLIGLLAYLIRYYGSYPDAIAFAVLLANLCVPLIDHYTQPRLYGTHK.

5 helical membrane-spanning segments follow: residues 19-39 (FMLWVIVAMLPALIVQIAFFG), 41-61 (GVVIQLAIALSMAIVIEIVVA), 66-86 (KSTTFYLADLAGVVTATILAM), 87-107 (AIPPYAPYWVVMIGMIVALLL), and 122-142 (PAMVAYAFLLISFPVQMTSWL). T186 carries the FMN phosphoryl threonine modification. The next 5 helical transmembrane spans lie at 212–232 (IFARGWLQLNLAFLAGGLFLL), 236–256 (IIHWQIPVAMLVVFSVLSALT), 265–285 (LNVLSQLFSGAMMFGAFFIAT), 291–311 (SITPKGKLIFGGLIGLLAYLI), and 315–335 (GSYPDAIAFAVLLANLCVPLI).

The protein belongs to the NqrB/RnfD family. As to quaternary structure, the complex is composed of six subunits: RnfA, RnfB, RnfC, RnfD, RnfE and RnfG. The cofactor is FMN.

The protein localises to the cell inner membrane. Its function is as follows. Part of a membrane-bound complex that couples electron transfer with translocation of ions across the membrane. This Haemophilus ducreyi (strain 35000HP / ATCC 700724) protein is Ion-translocating oxidoreductase complex subunit D.